Consider the following 511-residue polypeptide: LEM domain-containing protein 2 (511 aa).

At Ala2 the chain carries N-acetylalanine. The LEM domain maps to 2–42 (AGLSDLELRRELQALGFQPGPITDTTRNVYRNKLRRLRGEA). Disordered regions lie at residues 18–110 (FQPG…SDAS) and 128–206 (GLSY…AGRT). Basic and acidic residues predominate over residues 38–80 (LRGEARLRDDERLREDAGPREDAGPRGPERQREEARLREEAPL). Residues 80-112 (LRARPAASVLRSEPWPLSPSPPAPSAASDASGP) form an interaction with lamin A/C complexes region. The interval 80-141 (LRARPAASVL…PPHAGPGPLR (62 aa)) is required for nuclear retention and interaction with LMNA isoform C. Low complexity-rich tracts occupy residues 81–94 (RARP…SEPW) and 172–183 (APPSASARPHSA). 2 helical membrane-spanning segments follow: residues 221–241 (LLLW…WVKM) and 385–405 (VTHV…LILL). Positions 403–511 (ILLKYRWRKL…KPSSFSDSER (109 aa)) are winged-Helix (WH). A phosphoserine mark is found at Ser505, Ser507, and Ser509.

Interacts (via N-terminus) with LMNA isoform C (via C-terminus) (in vitro). Interacts (via LEM domain) with BANF1. Interacts (via C-terminus) with CHMP7. Interacts (via N-terminus) with tubulin; the interaction causes microtubule bundling and stabilization (in vitro). In terms of processing, phosphorylated; strongly phosphorylated in mitosis compared to G1/S. As to expression, ubiquitously expressed, including liver, brain, heart, skeletal muscle, lung, testis, spleen, kidney and white adipose tissue.

The protein localises to the nucleus inner membrane. The protein resides in the nucleus envelope. Its subcellular location is the cytoplasm. It localises to the cytoskeleton. It is found in the spindle. Functionally, nuclear lamina-associated inner nuclear membrane protein that is involved in nuclear structure organization and maintenance of nuclear envelope (NE) integrity and NE reformation after mitosis. Plays a role as transmembrane adapter for the endosomal sorting complexes required for transport (ESCRT), and is thereby involved in ESCRT-mediated NE reformation. Promotes ESCRT-mediated NE closure by recruiting CHMP7 and downstream ESCRT-III proteins IST1/CHMP8 and CHMP2A to the reforming NE during anaphase. During nuclear reassembly, condenses into a liquid-like coating around microtubule spindles and coassembles with CHMP7 to form a macromolecular O-ring seal at the confluence between membranes, chromatin, and the spindle to facilitate early nuclear sealing. Plays a role in the organization of heterochromatin associated with the NE and in the maintenance of NE organization under mechanical stress. Required for embryonic development and is involved in regulation of several signaling pathways such as MAPK and AKT. Required for myoblast differentiation involving regulation of ERK signaling. Essential for cardiac homeostasis and proper heart function. This Mus musculus (Mouse) protein is LEM domain-containing protein 2 (Lemd2).